The chain runs to 240 residues: Large ribosomal subunit protein uL2 (240 aa).

The segment covering 1–12 (MGRRIQGQRRGR) has biased composition (basic residues). 2 disordered regions span residues 1–21 (MGRR…RAPS) and 198–240 (VDHP…GSNK). Residues 221-231 (PPGRKVGDIAS) are compositionally biased toward basic and acidic residues.

Belongs to the universal ribosomal protein uL2 family. As to quaternary structure, part of the 50S ribosomal subunit. Forms a bridge to the 30S subunit in the 70S ribosome.

In terms of biological role, one of the primary rRNA binding proteins. Required for association of the 30S and 50S subunits to form the 70S ribosome, for tRNA binding and peptide bond formation. It has been suggested to have peptidyltransferase activity; this is somewhat controversial. Makes several contacts with the 16S rRNA in the 70S ribosome. The protein is Large ribosomal subunit protein uL2 of Halorubrum lacusprofundi (strain ATCC 49239 / DSM 5036 / JCM 8891 / ACAM 34).